The sequence spans 319 residues: Homoserine kinase (319 aa).

100–110 (PLSSGMGSSAS) is an ATP binding site.

The protein belongs to the GHMP kinase family. Homoserine kinase subfamily.

It localises to the cytoplasm. It catalyses the reaction L-homoserine + ATP = O-phospho-L-homoserine + ADP + H(+). The protein operates within amino-acid biosynthesis; L-threonine biosynthesis; L-threonine from L-aspartate: step 4/5. Functionally, catalyzes the ATP-dependent phosphorylation of L-homoserine to L-homoserine phosphate. This is Homoserine kinase from Chloroherpeton thalassium (strain ATCC 35110 / GB-78).